The primary structure comprises 1483 residues: Cystic fibrosis transmembrane conductance regulator (1483 aa).

Over 1–77 (MQRSPLEKAS…KLINALRRCF (77 aa)) the chain is Cytoplasmic. The helical transmembrane segment at 78 to 98 (FWRFAFYGILLYLGEVTKAVQ) threads the bilayer. An ABC transmembrane type-1 1 domain is found at 81–365 (FAFYGILLYL…WAVQTWYDSL (285 aa)). At 99–122 (PLLLGRIIASYDPDNKQERSIAIY) the chain is on the extracellular side. A helical transmembrane segment spans residues 123 to 146 (LAIGLCLLFIMRPLLLHPAIFGLH). Topologically, residues 147 to 195 (HIGMQIRIAMFSLIYKKTLKLSSRVLDKISIGQLVSLLSNNLNKFDEGL) are cytoplasmic. Residues 196-216 (ALAHFVWIAPLQVTLLMGLLW) traverse the membrane as a helical segment. At 217 to 222 (DLLQAS) the chain is on the extracellular side. The chain crosses the membrane as a helical span at residues 223 to 243 (AFCGLAFLIVLALVQAGLGRM). The Cytoplasmic segment spans residues 244–298 (IMKYRDQRAGKINERLVITSEVIENIQSVKAYCWEEAMEKIIENIRQTELKLTRK). Residues 299–319 (AAHVRYFNSSAFFFSGFFVVS) traverse the membrane as a helical segment. Residues 320–339 (LSVLPYALIKTIILRKIFTT) are Extracellular-facing. Residues 340 to 358 (ISFCIVLRMAVTRQFPWAV) traverse the membrane as a helical segment. At 359-859 (QTWYDSLGAI…YLRYITVHKN (501 aa)) the chain is on the cytoplasmic side. ATP is bound by residues Trp-401, Ser-434, 458–465 (GSTGAGKT), and Gln-493. One can recognise an ABC transporter 1 domain in the interval 423–646 (NGDNSLFFSN…RPDFSSKLMG (224 aa)). The S-palmitoyl cysteine moiety is linked to residue Cys-524. Phosphoserine is present on residues Ser-549 and Ser-660. Residues 654-832 (SPERRNSIIT…EEINEEDLKE (179 aa)) form a disordered R region region. Residue Ser-670 is modified to Phosphoserine; by PKA. The residue at position 686 (Ser-686) is a Phosphoserine. Lys-688 is covalently cross-linked (Glycyl lysine isopeptide (Lys-Gly) (interchain with G-Cter in ubiquitin)). Residues Ser-700 and Ser-712 each carry the phosphoserine modification. At Thr-717 the chain carries Phosphothreonine. Ser-737, Ser-768, Ser-791, Ser-796, and Ser-814 each carry phosphoserine. The chain crosses the membrane as a helical span at residues 860–880 (LIFVLIWCLVIFLAEVAVSLV). The region spanning 860 to 1156 (LIFVLIWCLV…AVNSSIEVDS (297 aa)) is the ABC transmembrane type-1 2 domain. Residues 881–919 (VLWILRNLSSQDKGNSTQSVNSSYAVIFTSTSAYYIFYI) are Extracellular-facing. N-linked (GlcNAc...) asparagine glycosylation is found at Asn-887, Asn-895, and Asn-901. A discontinuously helical transmembrane segment spans residues 920–940 (YVGVADTLLALGLFRGLPLVH). Residues 941–991 (TLITVSKILHHKMLHSVLQAPMSTLNTLKAGGILNRFSKDIAILDDLLPLT) are Cytoplasmic-facing. The helical transmembrane segment at 992–1012 (IFDFIQLLLIVIGAVAVVSVL) threads the bilayer. Topologically, residues 1013 to 1014 (QP) are extracellular. The chain crosses the membrane as a helical span at residues 1015–1035 (YIFLATVPVIAAFIILRAYFL). At 1036–1096 (HTSQQLKQLE…TANWFLYLST (61 aa)) the chain is on the cytoplasmic side. Residues 1097–1117 (LRWFQMRMEIIFVIFFIAVTF) form a helical membrane-spanning segment. The Extracellular segment spans residues 1118-1131 (ISILTTGEGEGTVG). Residues 1132–1152 (IILTLAMNIMGTLQWAVNSSI) traverse the membrane as a helical segment. The Cytoplasmic portion of the chain corresponds to 1153-1483 (EVDSLMRSVS…TEDEVQDTRL (331 aa)). Residues 1213 to 1446 (MTVKDLTAKY…RSAFRQAIGP (234 aa)) enclose the ABC transporter 2 domain. Residues Tyr-1222 and 1247-1254 (GRTGSGKS) each bind ATP. The interval 1389 to 1483 (RTLKQAFADC…TEDEVQDTRL (95 aa)) is interaction with GORASP2. The S-palmitoyl cysteine moiety is linked to residue Cys-1398. Positions 1444–1483 (IGPPERPGLLPHRLSSRQRSPSRIAALKEETEDEVQDTRL) are disordered. Ser-1459 carries the phosphoserine modification. Residues 1473-1483 (ETEDEVQDTRL) show a composition bias toward acidic residues. Residues 1481-1483 (TRL) carry the PDZ-binding motif.

Belongs to the ABC transporter superfamily. ABCC family. CFTR transporter (TC 3.A.1.202) subfamily. Monomer; does not require oligomerization for channel activity. May form oligomers in the membrane. Interacts with SLC26A3, SLC26A6 and NHERF1. Interacts with SHANK2. Interacts with MYO6. Interacts (via C-terminus) with GOPC (via PDZ domain); this promotes CFTR internalization and thereby decreases channel activity. Interacts with SLC4A7 through NHERF1. Found in a complex with MYO5B and RAB11A. Interacts with ANO1. Interacts with SLC26A8. Interacts with AHCYL1; the interaction increases CFTR activity. Interacts with CSE1L. The core-glycosylated form interacts with GORASP2 (via PDZ GRASP-type 1 domain) in respone to ER stress. Interacts with MARCHF2; the interaction leads to CFTR ubiqtuitination and degradation. Interacts with ADGRG2. In terms of processing, N-glycosylated. Phosphorylated; cAMP treatment promotes phosphorylation and activates the channel. Dephosphorylation decreases the ATPase activity (in vitro). Phosphorylation at PKA sites activates the channel. Phosphorylation at PKC sites enhances the response to phosphorylation by PKA. Phosphorylated by AMPK; this inhibits channel activity. Post-translationally, ubiquitinated, leading to its degradation in the lysosome. Deubiquitination by USP10 in early endosomes enhances its endocytic recycling to the cell membrane. Ubiquitinated by RNF185 during ER stress. Ubiquitinated by MARCHF2.

Its subcellular location is the apical cell membrane. It localises to the early endosome membrane. The protein resides in the cell membrane. The protein localises to the recycling endosome membrane. It is found in the endoplasmic reticulum membrane. Its subcellular location is the nucleus. The catalysed reaction is ATP + H2O + closed Cl(-) channel = ADP + phosphate + open Cl(-) channel.. It catalyses the reaction chloride(in) = chloride(out). It carries out the reaction hydrogencarbonate(in) = hydrogencarbonate(out). The enzyme catalyses ATP + H2O = ADP + phosphate + H(+). Functionally, epithelial ion channel that plays an important role in the regulation of epithelial ion and water transport and fluid homeostasis. Mediates the transport of chloride ions across the cell membrane. Possesses an intrinsic ATPase activity and utilizes ATP to gate its channel; the passive flow of anions through the channel is gated by cycles of ATP binding and hydrolysis by the ATP-binding domains. The ion channel is also permeable to HCO(3)(-); selectivity depends on the extracellular chloride concentration. Exerts its function also by modulating the activity of other ion channels and transporters. Contributes to the regulation of the pH and the ion content of the epithelial fluid layer. Modulates the activity of the epithelial sodium channel (ENaC) complex, in part by regulating the cell surface expression of the ENaC complex. May regulate bicarbonate secretion and salvage in epithelial cells by regulating the transporter SLC4A7. Can inhibit the chloride channel activity of ANO1. Plays a role in the chloride and bicarbonate homeostasis during sperm epididymal maturation and capacitation. In Canis lupus familiaris (Dog), this protein is Cystic fibrosis transmembrane conductance regulator.